The primary structure comprises 185 residues: Ribosome-recycling factor (185 aa).

Belongs to the RRF family.

It localises to the cytoplasm. Functionally, responsible for the release of ribosomes from messenger RNA at the termination of protein biosynthesis. May increase the efficiency of translation by recycling ribosomes from one round of translation to another. In Myxococcus xanthus (strain DK1622), this protein is Ribosome-recycling factor.